We begin with the raw amino-acid sequence, 226 residues long: Putative ABC transporter ATP-binding protein BQ02700 (226 aa).

The region spanning Ile4–Met225 is the ABC transporter domain. An ATP-binding site is contributed by Gly35–Ser42.

It belongs to the ABC transporter superfamily.

The protein localises to the cell inner membrane. Probably part of an ABC transporter complex. Responsible for energy coupling to the transport system. The sequence is that of Putative ABC transporter ATP-binding protein BQ02700 from Bartonella quintana (strain Toulouse) (Rochalimaea quintana).